The chain runs to 379 residues: Cytochrome b (379 aa).

The next 8 membrane-spanning stretches (helical) occupy residues 33–53 (FGSL…FLAM), 77–98 (WLIR…FLHV), 113–133 (WNIG…GYVL), 178–198 (FFAF…VHLL), 226–246 (IKDV…VLFS), 288–308 (LGGV…PILH), 320–340 (LSQC…WIGG), and 347–367 (FITI…LALP). Residues His-83 and His-97 each contribute to the heme b site. Residues His-182 and His-196 each coordinate heme b.

It belongs to the cytochrome b family. The cytochrome bc1 complex contains 11 subunits: 3 respiratory subunits (MT-CYB, CYC1 and UQCRFS1), 2 core proteins (UQCRC1 and UQCRC2) and 6 low-molecular weight proteins (UQCRH/QCR6, UQCRB/QCR7, UQCRQ/QCR8, UQCR10/QCR9, UQCR11/QCR10 and a cleavage product of UQCRFS1). This cytochrome bc1 complex then forms a dimer. Heme b is required as a cofactor.

The protein resides in the mitochondrion inner membrane. In terms of biological role, component of the ubiquinol-cytochrome c reductase complex (complex III or cytochrome b-c1 complex) that is part of the mitochondrial respiratory chain. The b-c1 complex mediates electron transfer from ubiquinol to cytochrome c. Contributes to the generation of a proton gradient across the mitochondrial membrane that is then used for ATP synthesis. This Sciurus niger (Eastern fox squirrel) protein is Cytochrome b (MT-CYB).